We begin with the raw amino-acid sequence, 124 residues long: Schlafen-like protein (124 aa).

Belongs to the Schlafen family. Subgroup poxviridae B3 subfamily.

This Homo sapiens (Human) protein is Schlafen-like protein.